Here is a 102-residue protein sequence, read N- to C-terminus: Small ribosomal subunit protein uS10 (102 aa).

The protein belongs to the universal ribosomal protein uS10 family. As to quaternary structure, part of the 30S ribosomal subunit.

In terms of biological role, involved in the binding of tRNA to the ribosomes. The polypeptide is Small ribosomal subunit protein uS10 (Nitrosomonas eutropha (strain DSM 101675 / C91 / Nm57)).